The following is a 572-amino-acid chain: Glutamate--tRNA ligase (572 aa).

Residues 107 to 117 carry the 'HIGH' region motif; it reads PNPDGAFHLGN.

It belongs to the class-I aminoacyl-tRNA synthetase family. Glutamate--tRNA ligase type 2 subfamily.

The protein resides in the cytoplasm. The enzyme catalyses tRNA(Glu) + L-glutamate + ATP = L-glutamyl-tRNA(Glu) + AMP + diphosphate. Its function is as follows. Catalyzes the attachment of glutamate to tRNA(Glu) in a two-step reaction: glutamate is first activated by ATP to form Glu-AMP and then transferred to the acceptor end of tRNA(Glu). The sequence is that of Glutamate--tRNA ligase from Pyrococcus furiosus (strain ATCC 43587 / DSM 3638 / JCM 8422 / Vc1).